The primary structure comprises 630 residues: DELLA protein DWARF8 (630 aa).

A disordered region spans residues 1 to 35 (MKREYQDAGGSGGDMGSSKDKMMAAAAGAGEQEEE). The DELLA motif motif lies at 38–42 (DELLA). The segment at 161–222 (PIPSPVAAPS…AAPPATQASA (62 aa)) is disordered. 2 stretches are compositionally biased toward low complexity: residues 165 to 176 (PVAAPSADPSTD) and 191 to 222 (TSSS…QASA). The region spanning 234–623 (VDTQEAGIRL…RPLIATSAWR (390 aa)) is the GRAS domain. The segment at 241–297 (IRLVHALLACAEAVQQENFSAAEALVKQIPMLASSQGGAMRKVAAYFGEALARRVYR) is leucine repeat I (LRI). Residues 248-252 (LACAE) carry the LxCxE motif motif. The interval 316–381 (HAHFYESCPY…GGPPSFRLTG (66 aa)) is VHIID. A VHIID motif is present at residues 347 to 351 (VHVVD). The interval 395–427 (QVGWKLAQFAHTIRVDFQYRGLVAATLADLEPF) is leucine repeat II (LRII). Positions 443-544 (IAVNSVFELH…EVYLGRQICN (102 aa)) are PFYRE. The LXXLL motif motif lies at 451–455 (LHRLL). The interval 547–623 (ACEGAERTER…RPLIATSAWR (77 aa)) is SAW.

The protein belongs to the GRAS family. DELLA subfamily. In terms of processing, phosphorylated. Ubiquitinated. Upon GA application it is ubiquitinated, leading to its subsequent degradation.

The protein resides in the nucleus. Functionally, probable transcriptional regulator that acts as a repressor of the gibberellin (GA) signaling pathway. Probably acts by participating in large multiprotein complexes that repress transcription of GA-inducible genes. Upon GA application, it is degraded by the proteasome, allowing the GA signaling pathway. The protein is DELLA protein DWARF8 (D8) of Zea mays (Maize).